The following is a 125-amino-acid chain: Ribosome-binding factor A (125 aa).

The protein belongs to the RbfA family. As to quaternary structure, monomer. Binds 30S ribosomal subunits, but not 50S ribosomal subunits or 70S ribosomes.

Its subcellular location is the cytoplasm. In terms of biological role, one of several proteins that assist in the late maturation steps of the functional core of the 30S ribosomal subunit. Associates with free 30S ribosomal subunits (but not with 30S subunits that are part of 70S ribosomes or polysomes). Required for efficient processing of 16S rRNA. May interact with the 5'-terminal helix region of 16S rRNA. In Xylella fastidiosa (strain M12), this protein is Ribosome-binding factor A.